Consider the following 119-residue polypeptide: Large ribosomal subunit protein uL18 (119 aa).

It belongs to the universal ribosomal protein uL18 family. As to quaternary structure, part of the 50S ribosomal subunit; part of the 5S rRNA/L5/L18/L25 subcomplex. Contacts the 5S and 23S rRNAs.

This is one of the proteins that bind and probably mediate the attachment of the 5S RNA into the large ribosomal subunit, where it forms part of the central protuberance. The sequence is that of Large ribosomal subunit protein uL18 from Borrelia recurrentis (strain A1).